Here is a 137-residue protein sequence, read N- to C-terminus: uncharacterized protein (137 aa).

The N-terminal stretch at 1–19 (MVAFYGIFLFGTVYLFGLA) is a signal peptide.

This is an uncharacterized protein from Acanthamoeba polyphaga (Amoeba).